A 449-amino-acid chain; its full sequence is Glucose-6-phosphate isomerase (449 aa).

E291 functions as the Proton donor in the catalytic mechanism. Active-site residues include H312 and K426.

Belongs to the GPI family.

Its subcellular location is the cytoplasm. The catalysed reaction is alpha-D-glucose 6-phosphate = beta-D-fructose 6-phosphate. It functions in the pathway carbohydrate biosynthesis; gluconeogenesis. It participates in carbohydrate degradation; glycolysis; D-glyceraldehyde 3-phosphate and glycerone phosphate from D-glucose: step 2/4. Its function is as follows. Catalyzes the reversible isomerization of glucose-6-phosphate to fructose-6-phosphate. This is Glucose-6-phosphate isomerase from Streptococcus equi subsp. zooepidemicus (strain MGCS10565).